Here is a 421-residue protein sequence, read N- to C-terminus: ATP-dependent RNA helicase eIF4A (421 aa).

The tract at residues 1–26 is disordered; the sequence is MSNDKGLEEIPEDQSTTPHKPTSNVG. The span at 13 to 26 shows a compositional bias: polar residues; that stretch reads DQSTTPHKPTSNVG. Residues 48–76 carry the Q motif motif; sequence DSFDAMELKPELLRGVYAYGFERPSAIQQ. The 171-residue stretch at 79–249 folds into the Helicase ATP-binding domain; sequence IKPIIKGSDV…TKFMRDPVRI (171 aa). ATP is bound at residue 92 to 99; the sequence is AQSGTGKT. The DEAD box motif lies at 197 to 200; that stretch reads DEAD. Residues 260 to 421 form the Helicase C-terminal domain; that stretch reads GIKQFYIAVE…EMPMNVADLI (162 aa).

It belongs to the DEAD box helicase family. eIF4A subfamily. Component of the eIF4F complex, which composition varies with external and internal environmental conditions. It is composed of at least eIF4A, eIF4E and eIF4G.

The protein localises to the cytoplasm. The enzyme catalyses ATP + H2O = ADP + phosphate + H(+). Its function is as follows. ATP-dependent RNA helicase which is a subunit of the eIF4F complex involved in cap recognition and is required for mRNA binding to ribosome. In the current model of translation initiation, eIF4A unwinds RNA secondary structures in the 5'-UTR of mRNAs which is necessary to allow efficient binding of the small ribosomal subunit, and subsequent scanning for the initiator codon. The protein is ATP-dependent RNA helicase eIF4A (tif1) of Aspergillus oryzae (strain ATCC 42149 / RIB 40) (Yellow koji mold).